The chain runs to 698 residues: Elongation factor G (698 aa).

The tr-type G domain maps to 10–285 (DKTRNIGIMA…GVVDYLPSPL (276 aa)). GTP contacts are provided by residues 19-26 (AHIDAGKT), 83-87 (DTPGH), and 137-140 (NKMD).

This sequence belongs to the TRAFAC class translation factor GTPase superfamily. Classic translation factor GTPase family. EF-G/EF-2 subfamily.

It localises to the cytoplasm. Functionally, catalyzes the GTP-dependent ribosomal translocation step during translation elongation. During this step, the ribosome changes from the pre-translocational (PRE) to the post-translocational (POST) state as the newly formed A-site-bound peptidyl-tRNA and P-site-bound deacylated tRNA move to the P and E sites, respectively. Catalyzes the coordinated movement of the two tRNA molecules, the mRNA and conformational changes in the ribosome. The chain is Elongation factor G from Lactobacillus johnsonii (strain CNCM I-12250 / La1 / NCC 533).